The chain runs to 409 residues: Snake venom metalloproteinase BITM02A (409 aa).

A signal peptide spans 1–20 (MIEVLLVTICLAAFPYQGSS). Residues 21–189 (IILESGNVND…KKASQSNLTP (169 aa)) constitute a propeptide that is removed on maturation. A Peptidase M12B domain is found at 193 to 389 (RYIELFIVVD…ENPQCILNKR (197 aa)). The Ca(2+) site is built by glutamate 196 and aspartate 280. Intrachain disulfides connect cysteine 304/cysteine 384, cysteine 344/cysteine 368, and cysteine 346/cysteine 351. Histidine 329 contributes to the Zn(2+) binding site. Glutamate 330 is an active-site residue. Zn(2+) contacts are provided by histidine 333 and histidine 339. The Ca(2+) site is built by cysteine 384, asparagine 387, valine 399, asparagine 402, leucine 404, glutamate 406, and glutamate 409. The propeptide occupies 390–409 (LRTDTVSTPVSGNELLEAGE).

It belongs to the venom metalloproteinase (M12B) family. P-I subfamily. Monomer. Zn(2+) serves as cofactor. As to expression, expressed by the venom gland.

Its subcellular location is the secreted. In terms of biological role, snake venom metalloproteinase that impairs hemostasis in the envenomed animal. The protein is Snake venom metalloproteinase BITM02A of Bothrops insularis (Golden lancehead).